The sequence spans 100 residues: Small ribosomal subunit protein uS14c (100 aa).

This sequence belongs to the universal ribosomal protein uS14 family. Part of the 30S ribosomal subunit.

It localises to the plastid. The protein resides in the chloroplast. Functionally, binds 16S rRNA, required for the assembly of 30S particles. This is Small ribosomal subunit protein uS14c from Vitis vinifera (Grape).